A 123-amino-acid polypeptide reads, in one-letter code: WAP four-disulfide core domain protein 5 (123 aa).

Positions Met-1–Gly-24 are cleaved as a signal peptide. 2 consecutive WAP domains span residues Lys-27–Arg-73 and Ile-74–Ala-121. 8 disulfides stabilise this stretch: Cys-34–Cys-62, Cys-41–Cys-66, Cys-49–Cys-61, Cys-55–Cys-70, Cys-81–Cys-109, Cys-88–Cys-113, Cys-96–Cys-108, and Cys-102–Cys-117.

The protein resides in the secreted. Functionally, putative acid-stable proteinase inhibitor. The chain is WAP four-disulfide core domain protein 5 (WFDC5) from Callithrix jacchus (White-tufted-ear marmoset).